A 201-amino-acid polypeptide reads, in one-letter code: 3-isopropylmalate dehydratase small subunit (201 aa).

Belongs to the LeuD family. LeuD type 1 subfamily. Heterodimer of LeuC and LeuD.

The enzyme catalyses (2R,3S)-3-isopropylmalate = (2S)-2-isopropylmalate. It participates in amino-acid biosynthesis; L-leucine biosynthesis; L-leucine from 3-methyl-2-oxobutanoate: step 2/4. Functionally, catalyzes the isomerization between 2-isopropylmalate and 3-isopropylmalate, via the formation of 2-isopropylmaleate. The chain is 3-isopropylmalate dehydratase small subunit from Sinorhizobium medicae (strain WSM419) (Ensifer medicae).